Reading from the N-terminus, the 56-residue chain is Large ribosomal subunit protein bL32 (56 aa).

Residues 1 to 37 (MAVQQNKKSRSRRDMRRSHDALTTAAVSVDKTTGETH) form a disordered region. A compositionally biased stretch (basic residues) spans 7–16 (KKSRSRRDMR).

The protein belongs to the bacterial ribosomal protein bL32 family.

This is Large ribosomal subunit protein bL32 from Haemophilus ducreyi (strain 35000HP / ATCC 700724).